We begin with the raw amino-acid sequence, 320 residues long: Homoserine kinase (320 aa).

100–110 (PLSSGMGSSAA) is an ATP binding site.

It belongs to the GHMP kinase family. Homoserine kinase subfamily.

It is found in the cytoplasm. It carries out the reaction L-homoserine + ATP = O-phospho-L-homoserine + ADP + H(+). It functions in the pathway amino-acid biosynthesis; L-threonine biosynthesis; L-threonine from L-aspartate: step 4/5. Catalyzes the ATP-dependent phosphorylation of L-homoserine to L-homoserine phosphate. The polypeptide is Homoserine kinase (Chlorobium phaeovibrioides (strain DSM 265 / 1930) (Prosthecochloris vibrioformis (strain DSM 265))).